Reading from the N-terminus, the 439-residue chain is 26S proteasome regulatory subunit 6A (439 aa).

An N-acetylmethionine modification is found at Met-1. Phosphoserine is present on Ser-9. 227–234 serves as a coordination point for ATP; it reads GPPGTGKT. Residue Ser-376 is modified to Phosphoserine.

This sequence belongs to the AAA ATPase family. Component of the 19S proteasome regulatory particle complex. The 26S proteasome consists of a 20S core particle (CP) and two 19S regulatory subunits (RP). The regulatory particle is made of a lid composed of 9 subunits, a base containing 6 ATPases including PSMC3 and few additional components. Interacts with PAAF1. In terms of assembly, (Microbial infection) Interacts with HIV-1 Tat. Sumoylated by UBE2I in response to MEKK1-mediated stimuli.

The protein resides in the cytoplasm. Its subcellular location is the nucleus. Functionally, component of the 26S proteasome, a multiprotein complex involved in the ATP-dependent degradation of ubiquitinated proteins. This complex plays a key role in the maintenance of protein homeostasis by removing misfolded or damaged proteins, which could impair cellular functions, and by removing proteins whose functions are no longer required. Therefore, the proteasome participates in numerous cellular processes, including cell cycle progression, apoptosis, or DNA damage repair. PSMC3 belongs to the heterohexameric ring of AAA (ATPases associated with diverse cellular activities) proteins that unfolds ubiquitinated target proteins that are concurrently translocated into a proteolytic chamber and degraded into peptides. This chain is 26S proteasome regulatory subunit 6A (PSMC3), found in Homo sapiens (Human).